The chain runs to 208 residues: Large ribosomal subunit protein uL4 (208 aa).

The interval 58–77 is disordered; the sequence is RGGGRKPWRQKGTGRARQGS. Over residues 60 to 71 the composition is skewed to basic residues; that stretch reads GGRKPWRQKGTG.

This sequence belongs to the universal ribosomal protein uL4 family. In terms of assembly, part of the 50S ribosomal subunit.

Functionally, one of the primary rRNA binding proteins, this protein initially binds near the 5'-end of the 23S rRNA. It is important during the early stages of 50S assembly. It makes multiple contacts with different domains of the 23S rRNA in the assembled 50S subunit and ribosome. Forms part of the polypeptide exit tunnel. The chain is Large ribosomal subunit protein uL4 from Caldicellulosiruptor saccharolyticus (strain ATCC 43494 / DSM 8903 / Tp8T 6331).